The sequence spans 353 residues: Inactive ubiquitin thioesterase OTULINL (353 aa).

Positions 1 to 80 (MEAPRSAPRE…KWWIGYLQRK (80 aa)) are required for membrane binding. In terms of domain architecture, OTU spans 125–353 (KCVRAVKRDN…NGHHYHIPVF (229 aa)).

This sequence belongs to the peptidase C65 family. Otulin subfamily. As to quaternary structure, does not bind ubiquitin or ubiquitin-like proteins.

It is found in the cytoplasm. The protein localises to the endoplasmic reticulum membrane. The protein resides in the nucleus envelope. In terms of biological role, lacks deubiquitinase activity. This Mus musculus (Mouse) protein is Inactive ubiquitin thioesterase OTULINL.